Reading from the N-terminus, the 409-residue chain is Dipeptidase 1 (409 aa).

Residues 1–16 form the signal peptide; it reads MWTSWWLWPLVAVCAA. His36 and Asp38 together coordinate Zn(2+). Asn57 carries an N-linked (GlcNAc...) asparagine glycan. Cysteines 87 and 170 form a disulfide. Glu141 provides a ligand contact to Zn(2+). His168 contributes to the substrate binding site. Residues His214 and His235 each coordinate Zn(2+). Cysteines 242 and 274 form a disulfide. Residue Arg246 coordinates substrate. Residue Asn279 is glycosylated (N-linked (GlcNAc...) asparagine). Residue Asp304 coordinates substrate. A lipid anchor (GPI-anchor amidated serine) is attached at Ser384. Residues 385–409 constitute a propeptide, removed in mature form; that stretch reads AAPSLHLPPGSLLASLVPLLLLSLP.

The protein belongs to the metallo-dependent hydrolases superfamily. Peptidase M19 family. As to quaternary structure, homodimer; disulfide-linked. Zn(2+) is required as a cofactor.

It is found in the apical cell membrane. The protein resides in the cell projection. It localises to the microvillus membrane. Its subcellular location is the cell membrane. The catalysed reaction is an L-aminoacyl-L-amino acid + H2O = 2 an L-alpha-amino acid. It carries out the reaction leukotriene D4 + H2O = leukotriene E4 + glycine. The enzyme catalyses L-cystine-bis-glycine + 2 H2O = L-cystine + 2 glycine. It catalyses the reaction a beta-lactam + H2O = a substituted beta-amino acid. The catalysed reaction is glycyldehydrophenylalanine + H2O = 2,3-didehydrophenylalanine + glycine. Its activity is regulated as follows. Inhibited by L-penicillamine. Inhibited by cilastatin. In terms of biological role, hydrolyzes a wide range of dipeptides. Hydrolyzes the conversion of leukotriene D4 to leukotriene E4. Hydrolyzes cystinyl-bis-glycine (cys-bis-gly) formed during glutathione degradation. Also possesses beta lactamase activity and hydrolytically inactivates beta-lactam antibiotics. Functionally, independently of its dipeptidase activity, acts as an adhesion receptor for neutrophil recruitment from bloodstream into inflamed lungs and liver. The polypeptide is Dipeptidase 1 (DPEP1) (Sus scrofa (Pig)).